Reading from the N-terminus, the 235-residue chain is Ubiquitin-conjugating enzyme E2 R1 (235 aa).

The 167-residue stretch at 8-174 folds into the UBC core domain; the sequence is SSQKALLLEL…IRKQVLGTKV (167 aa). The active-site Glycyl thioester intermediate is the C93. The segment at 98–113 is important for ubiquitin transfer; the sequence is HPPVDDPQSGELPSER. Residues 190-235 form an SCF-binding region; that stretch reads YCVKTKAPAPDEGSDLFYDDYYEDGEVEEADSCFGDEEDDSGTEES. S203, S221, and S230 each carry phosphoserine; by CK2. T232 is subject to Phosphothreonine; by CK2. The residue at position 235 (S235) is a Phosphoserine; by CK2.

Belongs to the ubiquitin-conjugating enzyme family. As to quaternary structure, interacts with multiple Cul1-RING E3 ubiquitin-protein ligase complexes, also known as SCF (SKP1-CUL1-F-box protein) complexes. Identified in a SCF (SKP1-CUL1-F-box protein) E3 ubiquitin ligase complex together with HINT1 and RBX1. When cullin is neddylated, the interaction between the E2 and the SCF complex is strengthened. Interacts with multiple Cul2-RING (CRL2) E3 ubiquitin-protein ligase complexes, also known as ECS (Elongin BC-CUL2/5-SOCS-box protein) complexes. When phosphorylated, interacts with beta-TrCP (BTRC). Interacts with casein kinase subunit CSNK2B. Interacts with CNTD1; this interaction regulates the cell-cycle progression. Phosphorylated by CK2. Phosphorylation of the C-terminal tail by CK2 controls the nuclear localization.

It localises to the cytoplasm. Its subcellular location is the nucleus. It catalyses the reaction S-ubiquitinyl-[E1 ubiquitin-activating enzyme]-L-cysteine + [E2 ubiquitin-conjugating enzyme]-L-cysteine = [E1 ubiquitin-activating enzyme]-L-cysteine + S-ubiquitinyl-[E2 ubiquitin-conjugating enzyme]-L-cysteine.. The catalysed reaction is S-ubiquitinyl-[E1 ubiquitin-activating enzyme]-L-cysteine + [acceptor protein]-L-lysine = [E1 ubiquitin-activating enzyme]-L-cysteine + N(6)-monoubiquitinyl-[acceptor protein]-L-lysine.. The protein operates within protein modification; protein ubiquitination. With respect to regulation, CDC34-catalyzed polyubiquitin chain assembly activity is stimulated by the conjugation of NEDD8 to the CUL1 SCF E3 ligase complex subunit. Functionally, E2 ubiquitin-conjugating enzyme that accepts ubiquitin from an E1 ubiquitin-activating protein, and catalyzes its covalent attachment to other proteins by an E3 ubiquitin-protein ligase complex. In vitro catalyzes 'Lys-48'-linked polyubiquitination. Cooperates with the E2 UBCH5C and the SCF(FBXW11) E3 ligase complex for the polyubiquitination of NFKBIA leading to its subsequent proteasomal degradation. Performs ubiquitin chain elongation building ubiquitin chains from the UBE2D3-primed NFKBIA-linked ubiquitin. UBE2D3 acts as an initiator E2, priming the phosphorylated NFKBIA target at positions 'Lys-21' and/or 'Lys-22' with a monoubiquitin. Cooperates with the SCF(SKP2) E3 ligase complex to regulate cell proliferation through ubiquitination and degradation of MYBL2 and KIP1. Involved in ubiquitin conjugation and degradation of CREM isoform ICERIIgamma and ATF15 resulting in abrogation of ICERIIgamma- and ATF5-mediated repression of cAMP-induced transcription during both meiotic and mitotic cell cycles. Involved in the regulation of the cell cycle G2/M phase through its targeting of the WEE1 kinase for ubiquitination and degradation. Also involved in the degradation of beta-catenin. In Mus musculus (Mouse), this protein is Ubiquitin-conjugating enzyme E2 R1 (Cdc34).